Reading from the N-terminus, the 486-residue chain is MSSSSKIDSEKPVMVSESLFSTKTPIKTVKRQIFSSSPKPESVIKLPERFEILEEFFNGLDTAIRLLKLKGSSTTYANICPKIEYLTNRIFSYDHLAQMKHIYPEAIELKRVLKFVEDTCCMKPRLHIKLNTDAIVVEDTICGTKYMELRKVFHSKLVDFRKAHPKDEIPKELLPEPFNSPQRDSYSGIVSVGLGEPKLEVGGFDVHMEEIEQEEQDVNKVIPDSTLSHIESRIVETPVKDLSTPSKDLSTPIRLMSATPTLQLSKRCIELTPEGGDDNSLRSTNSLARGPSRSLNFDTFEEDAIEKDDIGNESDDKGINYEEDGLLQSVKGPSRSLNFDTLEEETIVKDDISNESGDEKSNYEGDNASDDDSLLQSMIERPKTEPEKHNLPQLVNLIHRVFHSTNRTVITKEELLYKIIANQINITDRREVEEQLSLMLQLVPDWISETKASSGDLLVRINKMSTAETVRARLEEATSHDISLIY.

Disordered stretches follow at residues 273–294 (PEGG…PSRS) and 348–371 (VKDD…ASDD). The segment covering 281–294 (LRSTNSLARGPSRS) has biased composition (polar residues). A compositionally biased stretch (basic and acidic residues) spans 348–363 (VKDDISNESGDEKSNY).

This sequence belongs to the Cdt1 family. In terms of tissue distribution, expressed in proliferating (e.g. shoot and root apical meristems, organ primordia, guard cells and stomatal lineage) and endoreplicating cells (e.g. developing trichomes).

The protein resides in the nucleus. In terms of biological role, member of the pre-replication complex. Regulates endoreduplication. Involved in the coordination of cell and plastid division. This is CDT1-like protein b (CDT1B) from Arabidopsis thaliana (Mouse-ear cress).